Reading from the N-terminus, the 287-residue chain is Alpha-tubulin N-acetyltransferase 2 (287 aa).

The N-acetyltransferase domain maps to 2-193 (VEFAFDIKHL…NNFVLYEGFF (192 aa)). Acetyl-CoA-binding positions include 127 to 140 (FYVHESRQRCGQGK) and 163 to 172 (SNKMLAFMAK).

This sequence belongs to the acetyltransferase ATAT1 family.

The protein localises to the midbody. It localises to the midbody ring. It catalyses the reaction L-lysyl-[alpha-tubulin] + acetyl-CoA = N(6)-acetyl-L-lysyl-[alpha-tubulin] + CoA + H(+). Functionally, specifically acetylates 'Lys-40' in alpha-tubulin on the lumenal side of microtubules. Promotes microtubule destabilization and accelerates microtubule dynamics; this activity may be independent of acetylation activity. Acetylates alpha-tubulin with a slow enzymatic rate, due to a catalytic site that is not optimized for acetyl transfer. Enters the microtubule through each end and diffuses quickly throughout the lumen of microtubules. Acetylates only long/old microtubules because of its slow acetylation rate since it does not have time to act on dynamically unstable microtubules before the enzyme is released. Main acetyltransferase responsible for alpha-tubulin 'Lys-40' acetylation in germline cells during the early stages of oogenesis. Required for normal egg chamber separation. The protein is Alpha-tubulin N-acetyltransferase 2 of Drosophila melanogaster (Fruit fly).